The primary structure comprises 274 residues: NH(3)-dependent NAD(+) synthetase (274 aa).

46–53 serves as a coordination point for ATP; it reads GISGGQDS. Aspartate 52 contributes to the Mg(2+) binding site. Position 140 (arginine 140) interacts with deamido-NAD(+). ATP is bound at residue threonine 160. Glutamate 165 contributes to the Mg(2+) binding site. Residues lysine 173 and aspartate 180 each coordinate deamido-NAD(+). Lysine 189 and threonine 211 together coordinate ATP. 260-261 provides a ligand contact to deamido-NAD(+); that stretch reads HK.

Belongs to the NAD synthetase family. In terms of assembly, homodimer.

The enzyme catalyses deamido-NAD(+) + NH4(+) + ATP = AMP + diphosphate + NAD(+) + H(+). It participates in cofactor biosynthesis; NAD(+) biosynthesis; NAD(+) from deamido-NAD(+) (ammonia route): step 1/1. Functionally, catalyzes the ATP-dependent amidation of deamido-NAD to form NAD. Uses ammonia as a nitrogen source. In Rhodococcus erythropolis (strain PR4 / NBRC 100887), this protein is NH(3)-dependent NAD(+) synthetase.